The following is a 148-amino-acid chain: MILGIGTDLANIERIERTLDRFGDRFRNRVFTEIEQRKAERRSDTAGTYAKRWAAKEACSKALGTGLRMGISWKDMAVSNLRSGQPVMQVTGWAAERLREMTPEGYEAIIHVTLTDDHPWAQAFVVIEARPLAEVGEVNLTYPAPPRM.

Positions 8 and 57 each coordinate Mg(2+).

This sequence belongs to the P-Pant transferase superfamily. AcpS family. Requires Mg(2+) as cofactor.

It localises to the cytoplasm. It carries out the reaction apo-[ACP] + CoA = holo-[ACP] + adenosine 3',5'-bisphosphate + H(+). Its function is as follows. Transfers the 4'-phosphopantetheine moiety from coenzyme A to a Ser of acyl-carrier-protein. This Ruegeria pomeroyi (strain ATCC 700808 / DSM 15171 / DSS-3) (Silicibacter pomeroyi) protein is Holo-[acyl-carrier-protein] synthase.